A 320-amino-acid chain; its full sequence is Stress-involved WYL domain-containing regulator (320 aa).

The region spanning 7–65 is the HTH deoR-type domain; sequence TTGRVVQLLGLLQSRRVWTGEELAERLGVTGRSVRRDIERLRELGYPVHASKGQGGGYQ. The H-T-H motif DNA-binding region spans 24–43; it reads WTGEELAERLGVTGRSVRRD. The WYL domain maps to 139 to 218; it reads DTAVAPDVLM…SDVRATGTTF (80 aa). Residues 245–320 form a WCX domain region; the sequence is VRYFAPEKVV…MADRLRRAVR (76 aa).

Homodimer.

Its function is as follows. Transcriptional activator. Acts as a transcriptional activator of the MSMEG_1357-56 operon upon genotoxic stress. Controls adjacent genes that belong to the DinB/YfiT-like putative metalloenzymes superfamily by upregulating their expression in response to various genotoxic stress conditions, including exposure to H(2)O(2) or the natural antibiotic zeocin, as well as mitomycin C (MMC), diamide and UVC radiation. Upon genotoxic stress, upregulates two genes encoding proteins of the DinB/YfiT-like putative metalloenzymes superfamily, MSMEG_1357 and MSMEG_1356. Binds different forms of single-stranded DNA (ssDNA) with high affinity, primarily through its characteristic WYL domain. Binds nucleic acids with single-stranded regions, such as polyT 20mer ssDNA, 5' tailed, 3' tailed and fork DNA, but not ssRNA. In Mycolicibacterium smegmatis (strain ATCC 700084 / mc(2)155) (Mycobacterium smegmatis), this protein is Stress-involved WYL domain-containing regulator.